Consider the following 83-residue polypeptide: RNA-binding protein Hfq (83 aa).

One can recognise a Sm domain in the interval 9–68; it reads DPYLNILRKERIPVSIFLVNGIKLQGQIESFDQFVILLRNTVSQMVYKHAISTVVPSRNV.

This sequence belongs to the Hfq family. Homohexamer.

Its function is as follows. RNA chaperone that binds small regulatory RNA (sRNAs) and mRNAs to facilitate mRNA translational regulation in response to envelope stress, environmental stress and changes in metabolite concentrations. Also binds with high specificity to tRNAs. This chain is RNA-binding protein Hfq, found in Chromohalobacter salexigens (strain ATCC BAA-138 / DSM 3043 / CIP 106854 / NCIMB 13768 / 1H11).